Consider the following 270-residue polypeptide: NAD kinase (270 aa).

D63 serves as the catalytic Proton acceptor. Residues 63–64, 131–132, K142, R159, D161, 172–177, A196, and Q230 each bind NAD(+); these read DG, NE, and TAYAMS.

The protein belongs to the NAD kinase family. The cofactor is a divalent metal cation.

It localises to the cytoplasm. It catalyses the reaction NAD(+) + ATP = ADP + NADP(+) + H(+). Involved in the regulation of the intracellular balance of NAD and NADP, and is a key enzyme in the biosynthesis of NADP. Catalyzes specifically the phosphorylation on 2'-hydroxyl of the adenosine moiety of NAD to yield NADP. This Methanoculleus marisnigri (strain ATCC 35101 / DSM 1498 / JR1) protein is NAD kinase.